The sequence spans 85 residues: Small ribosomal subunit protein bS16c (85 aa).

Belongs to the bacterial ribosomal protein bS16 family.

The protein localises to the plastid. Its subcellular location is the chloroplast. The protein is Small ribosomal subunit protein bS16c of Cucumis sativus (Cucumber).